A 692-amino-acid chain; its full sequence is E3 ubiquitin-protein ligase brl1 (692 aa).

Residues 302–370 (SNEEKIESIN…RNERDSLVAK (69 aa)) adopt a coiled-coil conformation. The RING-type zinc-finger motif lies at 639 to 679 (CSVCNFSNWKSKLIPNCGHAFCSNCMEPFYEHKTSTCPQCE).

The protein belongs to the BRE1 family. As to quaternary structure, component of the histone H2B ubiquitin ligase complex (HULC) composed of at least brl1, brl2, rhp6 and shf1.

Its subcellular location is the nucleus. The catalysed reaction is S-ubiquitinyl-[E2 ubiquitin-conjugating enzyme]-L-cysteine + [acceptor protein]-L-lysine = [E2 ubiquitin-conjugating enzyme]-L-cysteine + N(6)-ubiquitinyl-[acceptor protein]-L-lysine.. It functions in the pathway protein modification; protein ubiquitination. Its function is as follows. E3 ubiquitin-protein ligase which belongs to the histone H2B ubiquitin ligase complex (HULC) which mediates monoubiquitination of histone H2B to form H2BK123ub1. H2BK123ub1 gives a specific tag for epigenetic transcriptional activation and is also a prerequisite for H3K4me and H3K79me formation. The sequence is that of E3 ubiquitin-protein ligase brl1 (brl1) from Schizosaccharomyces pombe (strain 972 / ATCC 24843) (Fission yeast).